The following is a 242-amino-acid chain: Uridylate kinase (242 aa).

Residue 17-20 (KLSG) coordinates ATP. Gly59 is a binding site for UMP. ATP contacts are provided by Gly60 and Arg64. UMP-binding positions include Asp79 and 140–147 (LGNPFFTT). ATP is bound by residues Thr167, Tyr173, and Asp176.

The protein belongs to the UMP kinase family. Homohexamer.

Its subcellular location is the cytoplasm. It catalyses the reaction UMP + ATP = UDP + ADP. The protein operates within pyrimidine metabolism; CTP biosynthesis via de novo pathway; UDP from UMP (UMPK route): step 1/1. Inhibited by UTP. Catalyzes the reversible phosphorylation of UMP to UDP. The protein is Uridylate kinase of Buchnera aphidicola subsp. Baizongia pistaciae (strain Bp).